The primary structure comprises 396 residues: Lipid-A-disaccharide synthase (396 aa).

The protein belongs to the LpxB family.

The catalysed reaction is a lipid X + a UDP-2-N,3-O-bis[(3R)-3-hydroxyacyl]-alpha-D-glucosamine = a lipid A disaccharide + UDP + H(+). The protein operates within bacterial outer membrane biogenesis; LPS lipid A biosynthesis. In terms of biological role, condensation of UDP-2,3-diacylglucosamine and 2,3-diacylglucosamine-1-phosphate to form lipid A disaccharide, a precursor of lipid A, a phosphorylated glycolipid that anchors the lipopolysaccharide to the outer membrane of the cell. The sequence is that of Lipid-A-disaccharide synthase from Acinetobacter baylyi (strain ATCC 33305 / BD413 / ADP1).